Consider the following 230-residue polypeptide: Stachydrine N-demethylase reductase subunit Stc3 (230 aa).

Belongs to the non-flavoprotein flavin reductase family. The system is probably composed of an oxygenase subunit (Stc2) and two reductase subunits (Stc3 and Stc4).

Its function is as follows. Reductase involved in the catabolism of stachydrine (L-proline betaine), a source of carbon and nitrogen. Part of a Rieske-type oxygenase system that catalyzes the demethylation of stachydrine to produce N-methyl-L-proline (monomethylproline). This subunit is probably involved in the transfer of electrons from NAD(P)H to the catalytic subunit Stc2. This chain is Stachydrine N-demethylase reductase subunit Stc3, found in Rhizobium meliloti (strain 1021) (Ensifer meliloti).